The chain runs to 141 residues: ATP synthase epsilon chain, chloroplastic (141 aa).

This sequence belongs to the ATPase epsilon chain family. As to quaternary structure, F-type ATPases have 2 components, F(1) - the catalytic core - and F(0) - the membrane proton channel. F(1) has five subunits: alpha(3), beta(3), gamma(1), delta(1), epsilon(1). F(0) has four main subunits: a(1), b(1), b'(1) and c(10-14). The alpha and beta chains form an alternating ring which encloses part of the gamma chain. F(1) is attached to F(0) by a central stalk formed by the gamma and epsilon chains, while a peripheral stalk is formed by the delta, b and b' chains.

It is found in the plastid. The protein localises to the chloroplast thylakoid membrane. In terms of biological role, f(1)F(0) ATP synthase produces ATP from ADP in the presence of a proton or sodium gradient. F-type ATPases consist of two structural domains, F(1) containing the extramembraneous catalytic core and F(0) containing the membrane proton channel, linked together by a central stalk and a peripheral stalk. During catalysis, ATP synthesis in the catalytic domain of F(1) is coupled via a rotary mechanism of the central stalk subunits to proton translocation. The polypeptide is ATP synthase epsilon chain, chloroplastic (Chlamydomonas reinhardtii (Chlamydomonas smithii)).